The chain runs to 142 residues: Large ribosomal subunit protein uL13 (142 aa).

This sequence belongs to the universal ribosomal protein uL13 family. As to quaternary structure, part of the 50S ribosomal subunit.

Functionally, this protein is one of the early assembly proteins of the 50S ribosomal subunit, although it is not seen to bind rRNA by itself. It is important during the early stages of 50S assembly. This Francisella philomiragia subsp. philomiragia (strain ATCC 25017 / CCUG 19701 / FSC 153 / O#319-036) protein is Large ribosomal subunit protein uL13.